Consider the following 462-residue polypeptide: Myb-like transcriptional regulator mfmK (462 aa).

3 HTH myb-type domains span residues 1 to 54 (MARL…WWNS), 56 to 110 (ADGT…DPGI), and 113 to 162 (CDWT…LKHE). 3 consecutive DNA-binding regions (H-T-H motif) follow at residues 32–52 (WRDL…RRWW), 83–106 (WSRV…SQVL), and 134–158 (WATI…STLR). Over residues 159–175 (LKHENESKRESTIRKSV) the composition is skewed to basic and acidic residues. 3 disordered regions span residues 159–184 (LKHE…NFEP), 216–262 (DEEE…VDNG), and 374–408 (STTT…RTSI). Over residues 216 to 235 (DEEEDDDDDDEDNEEDDGDD) the composition is skewed to acidic residues. 2 stretches are compositionally biased toward polar residues: residues 374–385 (STTTGMDSSSAP) and 396–408 (FGTS…RTSI).

Its subcellular location is the nucleus. Myb-like transcriptional regulator; part of the gene cluster that mediates the biosynthesis of the phthalide-terpenoid hybrid 11'-O-desmethylfendlerol. The protein is Myb-like transcriptional regulator mfmK of Annulohypoxylon moriforme (Filamentous fungus).